The sequence spans 558 residues: Dihydroxy-acid dehydratase (558 aa).

Aspartate 81 contacts Mg(2+). Residue cysteine 122 coordinates [2Fe-2S] cluster. 2 residues coordinate Mg(2+): aspartate 123 and lysine 124. Lysine 124 is subject to N6-carboxylysine. Cysteine 195 is a [2Fe-2S] cluster binding site. Glutamate 447 provides a ligand contact to Mg(2+). Serine 473 functions as the Proton acceptor in the catalytic mechanism.

Belongs to the IlvD/Edd family. In terms of assembly, homodimer. Requires [2Fe-2S] cluster as cofactor. The cofactor is Mg(2+).

It carries out the reaction (2R)-2,3-dihydroxy-3-methylbutanoate = 3-methyl-2-oxobutanoate + H2O. The enzyme catalyses (2R,3R)-2,3-dihydroxy-3-methylpentanoate = (S)-3-methyl-2-oxopentanoate + H2O. The protein operates within amino-acid biosynthesis; L-isoleucine biosynthesis; L-isoleucine from 2-oxobutanoate: step 3/4. It participates in amino-acid biosynthesis; L-valine biosynthesis; L-valine from pyruvate: step 3/4. Functions in the biosynthesis of branched-chain amino acids. Catalyzes the dehydration of (2R,3R)-2,3-dihydroxy-3-methylpentanoate (2,3-dihydroxy-3-methylvalerate) into 2-oxo-3-methylpentanoate (2-oxo-3-methylvalerate) and of (2R)-2,3-dihydroxy-3-methylbutanoate (2,3-dihydroxyisovalerate) into 2-oxo-3-methylbutanoate (2-oxoisovalerate), the penultimate precursor to L-isoleucine and L-valine, respectively. The protein is Dihydroxy-acid dehydratase of Bacillus subtilis (strain 168).